The chain runs to 319 residues: tRNA U34 carboxymethyltransferase (319 aa).

Carboxy-S-adenosyl-L-methionine contacts are provided by residues Lys-88, Trp-102, Lys-107, Gly-126, 176–177 (LE), Met-192, Tyr-196, and Arg-311.

The protein belongs to the class I-like SAM-binding methyltransferase superfamily. CmoB family. Homotetramer.

It carries out the reaction carboxy-S-adenosyl-L-methionine + 5-hydroxyuridine(34) in tRNA = 5-carboxymethoxyuridine(34) in tRNA + S-adenosyl-L-homocysteine + H(+). Its function is as follows. Catalyzes carboxymethyl transfer from carboxy-S-adenosyl-L-methionine (Cx-SAM) to 5-hydroxyuridine (ho5U) to form 5-carboxymethoxyuridine (cmo5U) at position 34 in tRNAs. The protein is tRNA U34 carboxymethyltransferase of Pseudomonas syringae pv. syringae (strain B728a).